Consider the following 465-residue polypeptide: Mothers against decapentaplegic homolog 1 (465 aa).

Residues 12-136 (PAVKRLLGWK…YKRVESPVLP (125 aa)) enclose the MH1 domain. Residues cysteine 64, cysteine 109, cysteine 121, and histidine 126 each contribute to the Zn(2+) site. The interval 161 to 240 (QNEPHMPHNA…EDQMTHDTSQ (80 aa)) is disordered. The span at 179-210 (PNSHPFPHSPNSSYPNSPGSSSSTYPHSPASS) shows a compositional bias: low complexity. The MH2 domain maps to 271–465 (WCSIVYYELN…SPHNPISSVS (195 aa)). Phosphoserine occurs at positions 463 and 465.

Belongs to the dwarfin/SMAD family. Found in a complex with SMAD4 and YY1. Interacts with HGS, NANOG and ZCCHC12. Upon C-terminus phosphorylation: forms trimers with another SMAD1 and the co-SMAD SMAD4. Interacts with PEBP2-alpha subunit, CREB-binding protein (CBP), p300, SMURF1, SMURF2, USP15 and HOXC8. Associates with ZNF423 or ZNF521 in response to BMP2 leading to activate transcription of BMP target genes. Interacts with SKOR1. Interacts (via MH2 domain) with LEMD3. Binding to LEMD3 results in at least a partial reduction of receptor-mediated phosphorylation. Forms a ternary complex with PSMB4 and OAZ1 before PSMB4 is incorporated into the 20S proteasome. Found in a macromolecular complex with FAM83G. Interacts (via MH2 domain) with FAM83G (via MH2 domain); in a SMAD4-independent manner. Interacts with ZC3H3. Interacts with TMEM119. Interacts (via MH1 and MH2 domains) with ZNF8. Interacts with RANBP3L; the interaction increases when SMAD1 is not phosphorylated and mediates SMAD1 nuclear export. Interacts with EGR1; this interaction inhibits SMAD1 dephosphorylation. Interacts with SMAD6. Interacts with YAP1. Phosphorylation of the C-terminal SVS motif by BMP type 1 receptor kinase activates SMAD1 by promoting dissociation from the receptor and trimerization with SMAD4. Phosphorylation by ERK2 MAP kinase in response to EGF or HGF prevents SMAD1 nuclear accumulation and transcriptional activity in response to BMP. Dephosphorylation, probably by PPM1A, induces its export from the nucleus to the cytoplasm. Dephosphorylation is inhibited by association with EGR1. Phosphorylation by CDK8/9 creates binding sites for YAP1, and subsequent phosphorylation by GSK3 switches off YAP1 binding and adds binding sites for SMURF1. Post-translationally, ubiquitinated by SMAD-specific E3 ubiquitin ligase SMURF1, leading to its degradation. Monoubiquitinated, leading to prevent DNA-binding. Deubiquitination by USP15 alleviates inhibition and promotes activation of TGF-beta target genes. Dephosphorylation, probably by PPM1A, induces its export from the nucleus to the cytoplasm. Phospho-SMAD1 is ubiquitinated by CHIP leading to disruption of the SMAD1-SMAD4 complex.

Its subcellular location is the cytoplasm. It is found in the nucleus. Transcriptional modulator that plays a role in various cellular processes, including embryonic development, cell differentiation, and tissue homeostasis. Upon BMP ligand binding to their receptors at the cell surface, is phosphorylated by activated type I BMP receptors (BMPRIs) and associates with SMAD4 to form an heteromeric complex which translocates into the nucleus acting as transcription factor. In turn, the hetero-trimeric complex recognizes cis-regulatory elements containing Smad Binding Elements (SBEs) to modulate the outcome of the signaling network. SMAD1/OAZ1/PSMB4 complex mediates the degradation of the CREBBP/EP300 repressor SNIP1. This Coturnix japonica (Japanese quail) protein is Mothers against decapentaplegic homolog 1 (SMAD1).